Reading from the N-terminus, the 559-residue chain is Fanconi-associated nuclease 1 homolog (559 aa).

The Mn(2+) site is built by E386, D507, E522, and V523. One can recognise a VRR-NUC domain in the interval 443–555 (DGSYRDAIRC…MPVAVCYVRW (113 aa)).

It belongs to the FAN1 family. It depends on Mn(2+) as a cofactor. Mg(2+) serves as cofactor.

The catalysed reaction is Hydrolytically removes 5'-nucleotides successively from the 3'-hydroxy termini of 3'-hydroxy-terminated oligonucleotides.. Nuclease required for the repair of DNA interstrand cross-links (ICL). Acts as a 5'-3' exonuclease that anchors at a cut end of DNA and cleaves DNA successively at every third nucleotide, allowing to excise an ICL from one strand through flanking incisions. Also has endonuclease activity toward 5'-flaps. In Pseudomonas aeruginosa (strain ATCC 15692 / DSM 22644 / CIP 104116 / JCM 14847 / LMG 12228 / 1C / PRS 101 / PAO1), this protein is Fanconi-associated nuclease 1 homolog.